Consider the following 33-residue polypeptide: Cecropin-B (33 aa).

A 5-hydroxylysine modification is found at Lys-21.

Monomer. In terms of tissue distribution, hemolymph.

The protein localises to the secreted. In terms of biological role, cecropins have lytic and antibacterial activity against several Gram-positive and Gram-negative bacteria. Also has activity against fungi. The chain is Cecropin-B from Heliothis virescens (Tobacco budworm moth).